The primary structure comprises 175 residues: NADH-ubiquinone oxidoreductase chain 6 (175 aa).

Transmembrane regions (helical) follow at residues 1 to 21, 25 to 45, 47 to 67, 88 to 108, and 149 to 169; these read MMTY…VGFS, SPIY…GIIM, FGGS…MLVV, TVMG…LYVL, and YGAW…LVIL.

It belongs to the complex I subunit 6 family. As to quaternary structure, core subunit of respiratory chain NADH dehydrogenase (Complex I) which is composed of 45 different subunits.

The protein resides in the mitochondrion inner membrane. It carries out the reaction a ubiquinone + NADH + 5 H(+)(in) = a ubiquinol + NAD(+) + 4 H(+)(out). Its function is as follows. Core subunit of the mitochondrial membrane respiratory chain NADH dehydrogenase (Complex I) which catalyzes electron transfer from NADH through the respiratory chain, using ubiquinone as an electron acceptor. Essential for the catalytic activity and assembly of complex I. The sequence is that of NADH-ubiquinone oxidoreductase chain 6 (MT-ND6) from Equus caballus (Horse).